Here is a 308-residue protein sequence, read N- to C-terminus: 1D-myo-inositol 2-acetamido-2-deoxy-alpha-D-glucopyranoside deacetylase (308 aa).

Residues histidine 13, aspartate 16, and histidine 147 each coordinate Zn(2+).

It belongs to the MshB deacetylase family. It depends on Zn(2+) as a cofactor.

It carries out the reaction 1D-myo-inositol 2-acetamido-2-deoxy-alpha-D-glucopyranoside + H2O = 1D-myo-inositol 2-amino-2-deoxy-alpha-D-glucopyranoside + acetate. Functionally, catalyzes the deacetylation of 1D-myo-inositol 2-acetamido-2-deoxy-alpha-D-glucopyranoside (GlcNAc-Ins) in the mycothiol biosynthesis pathway. The protein is 1D-myo-inositol 2-acetamido-2-deoxy-alpha-D-glucopyranoside deacetylase of Mycobacterium leprae (strain Br4923).